A 206-amino-acid chain; its full sequence is Superoxide dismutase [Mn] (206 aa).

Mn(2+)-binding residues include H27, H82, D168, and H172.

Belongs to the iron/manganese superoxide dismutase family. As to quaternary structure, homodimer. Mn(2+) is required as a cofactor.

It carries out the reaction 2 superoxide + 2 H(+) = H2O2 + O2. In terms of biological role, destroys superoxide anion radicals which are normally produced within the cells and which are toxic to biological systems. In Salmonella typhimurium (strain LT2 / SGSC1412 / ATCC 700720), this protein is Superoxide dismutase [Mn] (sodA).